The chain runs to 208 residues: Uracil phosphoribosyltransferase (208 aa).

Residues R78, R103, and 130–138 each bind 5-phospho-alpha-D-ribose 1-diphosphate; that span reads DPMLATGGS. Residues I193 and 198 to 200 each bind uracil; that span reads GDA. 5-phospho-alpha-D-ribose 1-diphosphate is bound at residue D199.

This sequence belongs to the UPRTase family. The cofactor is Mg(2+).

The catalysed reaction is UMP + diphosphate = 5-phospho-alpha-D-ribose 1-diphosphate + uracil. It participates in pyrimidine metabolism; UMP biosynthesis via salvage pathway; UMP from uracil: step 1/1. With respect to regulation, allosterically activated by GTP. Its function is as follows. Catalyzes the conversion of uracil and 5-phospho-alpha-D-ribose 1-diphosphate (PRPP) to UMP and diphosphate. The sequence is that of Uracil phosphoribosyltransferase from Shewanella denitrificans (strain OS217 / ATCC BAA-1090 / DSM 15013).